We begin with the raw amino-acid sequence, 116 residues long: Ribonuclease P protein component (116 aa).

This sequence belongs to the RnpA family. As to quaternary structure, consists of a catalytic RNA component (M1 or rnpB) and a protein subunit.

It carries out the reaction Endonucleolytic cleavage of RNA, removing 5'-extranucleotides from tRNA precursor.. RNaseP catalyzes the removal of the 5'-leader sequence from pre-tRNA to produce the mature 5'-terminus. It can also cleave other RNA substrates such as 4.5S RNA. The protein component plays an auxiliary but essential role in vivo by binding to the 5'-leader sequence and broadening the substrate specificity of the ribozyme. The chain is Ribonuclease P protein component from Citrifermentans bemidjiense (strain ATCC BAA-1014 / DSM 16622 / JCM 12645 / Bem) (Geobacter bemidjiensis).